Here is a 297-residue protein sequence, read N- to C-terminus: Pyridoxal 5'-phosphate synthase subunit SNZ1 (297 aa).

A D-ribose 5-phosphate-binding site is contributed by Asp23. Lys80 (schiff-base intermediate with D-ribose 5-phosphate) is an active-site residue. Gly152 lines the D-ribose 5-phosphate pocket. Arg164 contacts D-glyceraldehyde 3-phosphate. D-ribose 5-phosphate-binding positions include Gly214 and 235 to 236; that span reads GS.

The protein belongs to the PdxS/SNZ family. Homohexamer. Interacts with AIM18.

The enzyme catalyses aldehydo-D-ribose 5-phosphate + D-glyceraldehyde 3-phosphate + L-glutamine = pyridoxal 5'-phosphate + L-glutamate + phosphate + 3 H2O + H(+). It functions in the pathway cofactor biosynthesis; pyridoxal 5'-phosphate biosynthesis. Catalyzes the formation of pyridoxal 5'-phosphate from ribose 5-phosphate (RBP), glyceraldehyde 3-phosphate (G3P) and ammonia. The ammonia is provided by a SNO isoform. Can also use ribulose 5-phosphate and dihydroxyacetone phosphate as substrates, resulting from enzyme-catalyzed isomerization of RBP and G3P, respectively. The chain is Pyridoxal 5'-phosphate synthase subunit SNZ1 (SNZ1) from Saccharomyces cerevisiae (strain ATCC 204508 / S288c) (Baker's yeast).